The sequence spans 703 residues: Glycogen [starch] synthase, liver (703 aa).

Residue S8 is modified to Phosphoserine; by PKA. S11 bears the Phosphoserine mark. Residue K40 coordinates UDP. UDP-alpha-D-glucose contacts are provided by H205 and R211. Residues H291, E292, Q294, H297, and K301 each contribute to the alpha-D-glucose 6-phosphate site. R331 serves as a coordination point for UDP. R331 contacts UDP-alpha-D-glucose. H501 is an alpha-D-glucose 6-phosphate binding site. UDP-alpha-D-glucose contacts are provided by E510, W512, and G513. T515 is a binding site for UDP. The alpha-D-glucose 6-phosphate site is built by R582 and R586. The residue at position 627 (S627) is a Phosphoserine. Residues 628-703 are disordered; the sequence is PPTTEGFKYP…KKKLHGEYKN (76 aa). Phosphoserine; by GSK3-alpha and GSK3-beta is present on residues S641, S645, S649, and S653. The segment covering 647 to 657 has biased composition (low complexity); the sequence is SGSQASSPQSS. At S657 the chain carries Phosphoserine; by CK2. Residues 658–674 show a composition bias toward acidic residues; it reads DVEDEVEDERYDEEEEA. S683 is subject to Phosphoserine.

The protein belongs to the glycosyltransferase 3 family. Part of the glycogen synthase (GS)-glycogenin complex, a heterooctamer composed of a tetramer of GS and 2 dimers of glycogenin, where each GS protomer binds to one glycogenin subunit (via glycogenin C-terminus); the GS tetramer may dissociate from glycogenin dimers to continue glycogen polymerization on its own. May also form a heterooctamer complex with GYG1 (via GYG1 C-terminus). In terms of processing, primed phosphorylation at Ser-657 (site 5) by CSNK2A1 and CSNK2A2 is required for inhibitory phosphorylation at Ser-641 (site 3a), Ser-645 (site 3b), Ser-649 (site 3c) and Ser-653 (site 4) by GSK3A an GSK3B. Dephosphorylation at Ser-641 and Ser-645 by PP1 activates the enzyme. Phosphorylation at Ser-8 is not required for interaction with GYG1. Interaction with GYG1 does not regulate the phosphorylation at Ser-8 and Ser-641. Specifically expressed in liver (at protein level).

The enzyme catalyses [(1-&gt;4)-alpha-D-glucosyl](n) + UDP-alpha-D-glucose = [(1-&gt;4)-alpha-D-glucosyl](n+1) + UDP + H(+). It participates in glycan biosynthesis; glycogen biosynthesis. With respect to regulation, allosteric activation by glucose-6-phosphate. Phosphorylation reduces the activity towards UDP-glucose. When in the non-phosphorylated state, glycogen synthase does not require glucose-6-phosphate as an allosteric activator; when phosphorylated it does. Functionally, glycogen synthase participates in the glycogen biosynthetic process along with glycogenin and glycogen branching enzyme. Extends the primer composed of a few glucose units formed by glycogenin by adding new glucose units to it. In this context, glycogen synthase transfers the glycosyl residue from UDP-Glc to the non-reducing end of alpha-1,4-glucan. The sequence is that of Glycogen [starch] synthase, liver from Homo sapiens (Human).